Here is a 633-residue protein sequence, read N- to C-terminus: GTPase-GDP dissociation stimulator BEM4 (633 aa).

In terms of assembly, interacts with CDC42; the interaction is direct. Interacts with RHO1; the interaction is direct. Interacts with RHO2. Interacts with RHO4. Interacts with CDC11.

It localises to the nucleus. It is found in the cytoplasm. In terms of biological role, probably acts as a GEF (guanine nucleotide exchange factor) for the Rho family of small GTP-binding proteins (G proteins) that stimulates the dissociation of GDP to enable subsequent binding of GTP. May also chaperone the processing and/or trafficking of small GTPases independently of GEF activity. Involved in the control of polarized cell growth via CDC42-mediated signaling. Involved in the control of cell-wall organization via RHO1-mediated signaling. May also function via RHO2 and RHO4. This is GTPase-GDP dissociation stimulator BEM4 from Saccharomyces cerevisiae (strain ATCC 204508 / S288c) (Baker's yeast).